A 150-amino-acid chain; its full sequence is Small ribosomal subunit protein uS7cz/uS7cy (150 aa).

The protein belongs to the universal ribosomal protein uS7 family. Part of the 30S ribosomal subunit.

It is found in the plastid. It localises to the chloroplast. One of the primary rRNA binding proteins, it binds directly to 16S rRNA where it nucleates assembly of the head domain of the 30S subunit. In Adiantum capillus-veneris (Maidenhair fern), this protein is Small ribosomal subunit protein uS7cz/uS7cy (rps7-A).